Reading from the N-terminus, the 84-residue chain is uncharacterized protein (84 aa).

One can recognise a 2Fe-2S ferredoxin-type domain in the interval alanine 2–methionine 84. [2Fe-2S] cluster contacts are provided by cysteine 37, cysteine 42, cysteine 45, and cysteine 74.

Requires [2Fe-2S] cluster as cofactor.

This is an uncharacterized protein from Escherichia coli O6:H1 (strain CFT073 / ATCC 700928 / UPEC).